Consider the following 727-residue polypeptide: Glycerol-3-phosphate dehydrogenase, mitochondrial (727 aa).

Residues 1-42 (MAFQKAVKGTILVGGGALATVLGLSPFAHYRRKQVSLAYVEA) constitute a mitochondrion transit peptide. FAD is bound at residue 71–99 (DILVIGGGATGCGCALDAVTRGLKTALVE). Tyr601 bears the Phosphotyrosine mark. EF-hand domains follow at residues 623 to 658 (SDIDRYKKRFHKFDEDEKGFITIVDVQRVLESINVQ) and 659 to 694 (MDENTLHEILCEVDLNKNGQVELHEFLQLMSAVQKG). The Ca(2+) site is built by Asp672, Asn674, Asn676, Gln678, and Glu683.

Belongs to the FAD-dependent glycerol-3-phosphate dehydrogenase family. FAD serves as cofactor.

Its subcellular location is the mitochondrion inner membrane. It carries out the reaction a quinone + sn-glycerol 3-phosphate = dihydroxyacetone phosphate + a quinol. Its pathway is polyol metabolism; glycerol degradation via glycerol kinase pathway; glycerone phosphate from sn-glycerol 3-phosphate (anaerobic route): step 1/1. Calcium-binding enhance the activity of the enzyme. Its function is as follows. Calcium-responsive mitochondrial glycerol-3-phosphate dehydrogenase which seems to be a key component of the pancreatic beta-cell glucose-sensing device. In Mus musculus (Mouse), this protein is Glycerol-3-phosphate dehydrogenase, mitochondrial.